Reading from the N-terminus, the 455-residue chain is Bifunctional protein GlmU (455 aa).

The tract at residues 1–226 is pyrophosphorylase; the sequence is MSLDIVILAA…AMEVQGANDR (226 aa). UDP-N-acetyl-alpha-D-glucosamine-binding positions include 8 to 11, Lys-22, Gln-73, 78 to 79, 99 to 101, Gly-136, Glu-151, Asn-166, and Asn-224; these read LAAG, GT, and YGD. Residue Asp-101 coordinates Mg(2+). Residue Asn-224 participates in Mg(2+) binding. The segment at 227-247 is linker; it reads RQLSELERHYQLREGRRLMAQ. The tract at residues 248–455 is N-acetyltransferase; the sequence is GVTLRDPARF…WKRPEKIKKS (208 aa). 2 residues coordinate UDP-N-acetyl-alpha-D-glucosamine: Arg-330 and Lys-348. Residue His-360 is the Proton acceptor of the active site. UDP-N-acetyl-alpha-D-glucosamine-binding residues include Tyr-363 and Asn-374. Residues Ala-377, 383–384, Ser-402, Ala-420, and Arg-437 contribute to the acetyl-CoA site; that span reads NY.

In the N-terminal section; belongs to the N-acetylglucosamine-1-phosphate uridyltransferase family. The protein in the C-terminal section; belongs to the transferase hexapeptide repeat family. As to quaternary structure, homotrimer. Mg(2+) serves as cofactor.

Its subcellular location is the cytoplasm. It catalyses the reaction alpha-D-glucosamine 1-phosphate + acetyl-CoA = N-acetyl-alpha-D-glucosamine 1-phosphate + CoA + H(+). The catalysed reaction is N-acetyl-alpha-D-glucosamine 1-phosphate + UTP + H(+) = UDP-N-acetyl-alpha-D-glucosamine + diphosphate. The protein operates within nucleotide-sugar biosynthesis; UDP-N-acetyl-alpha-D-glucosamine biosynthesis; N-acetyl-alpha-D-glucosamine 1-phosphate from alpha-D-glucosamine 6-phosphate (route II): step 2/2. It functions in the pathway nucleotide-sugar biosynthesis; UDP-N-acetyl-alpha-D-glucosamine biosynthesis; UDP-N-acetyl-alpha-D-glucosamine from N-acetyl-alpha-D-glucosamine 1-phosphate: step 1/1. It participates in bacterial outer membrane biogenesis; LPS lipid A biosynthesis. In terms of biological role, catalyzes the last two sequential reactions in the de novo biosynthetic pathway for UDP-N-acetylglucosamine (UDP-GlcNAc). The C-terminal domain catalyzes the transfer of acetyl group from acetyl coenzyme A to glucosamine-1-phosphate (GlcN-1-P) to produce N-acetylglucosamine-1-phosphate (GlcNAc-1-P), which is converted into UDP-GlcNAc by the transfer of uridine 5-monophosphate (from uridine 5-triphosphate), a reaction catalyzed by the N-terminal domain. This is Bifunctional protein GlmU from Pseudomonas putida (strain ATCC 700007 / DSM 6899 / JCM 31910 / BCRC 17059 / LMG 24140 / F1).